The chain runs to 313 residues: NADH-ubiquinone oxidoreductase chain 1 (313 aa).

A run of 8 helical transmembrane segments spans residues 7–27 (LIGS…LTLL), 73–93 (IFYY…WMSM), 104–124 (LGVL…MVAG), 150–170 (LALI…LNFF), 175–195 (YMWF…SCLA), 226–246 (LIFL…SVIF), 250–270 (DIYS…FIWV), and 293–313 (MSLN…SMLF).

This sequence belongs to the complex I subunit 1 family.

It is found in the mitochondrion inner membrane. The enzyme catalyses a ubiquinone + NADH + 5 H(+)(in) = a ubiquinol + NAD(+) + 4 H(+)(out). Functionally, core subunit of the mitochondrial membrane respiratory chain NADH dehydrogenase (Complex I) that is believed to belong to the minimal assembly required for catalysis. Complex I functions in the transfer of electrons from NADH to the respiratory chain. The immediate electron acceptor for the enzyme is believed to be ubiquinone. The sequence is that of NADH-ubiquinone oxidoreductase chain 1 from Aedes aegypti (Yellowfever mosquito).